Here is a 207-residue protein sequence, read N- to C-terminus: Imidazoleglycerol-phosphate dehydratase (207 aa).

The protein belongs to the imidazoleglycerol-phosphate dehydratase family.

It is found in the cytoplasm. It carries out the reaction D-erythro-1-(imidazol-4-yl)glycerol 3-phosphate = 3-(imidazol-4-yl)-2-oxopropyl phosphate + H2O. Its pathway is amino-acid biosynthesis; L-histidine biosynthesis; L-histidine from 5-phospho-alpha-D-ribose 1-diphosphate: step 6/9. The chain is Imidazoleglycerol-phosphate dehydratase (hisB) from Azospirillum brasilense.